A 488-amino-acid polypeptide reads, in one-letter code: WD repeat-containing protein slp1 (488 aa).

2 disordered regions span residues 1–29 (MEIA…PNSP) and 74–93 (CGSP…FIPS). Positions 7–17 (SSTISPTFSTP) are enriched in low complexity. WD repeat units lie at residues 178–215 (IDDY…VSAL), 219–258 (DEST…KLRT), 261–298 (GHQA…HQIG), 302–341 (GHSS…PKFT), 344–386 (NHNA…RVNT), 388–429 (DAGS…LTKQ), and 434–473 (AHDT…HVKR).

This sequence belongs to the WD repeat CDC20/Fizzy family. In terms of assembly, interacts with cdc13, mad3 and mes1.

In terms of biological role, required for mad2-dependent spindle checkpoint activation. Promotes ubiquitin-dependent degradation of cdc13 by the anaphase promoting complex/cyclosome (APC/C). The polypeptide is WD repeat-containing protein slp1 (slp1) (Schizosaccharomyces pombe (strain 972 / ATCC 24843) (Fission yeast)).